We begin with the raw amino-acid sequence, 427 residues long: 3-phosphoshikimate 1-carboxyvinyltransferase (427 aa).

3 residues coordinate 3-phosphoshikimate: Lys-22, Ser-23, and Arg-27. Residue Lys-22 participates in phosphoenolpyruvate binding. Phosphoenolpyruvate contacts are provided by Gly-96 and Arg-124. Ser-169, Ser-170, Gln-171, Ser-197, Asp-313, Asn-336, and Lys-340 together coordinate 3-phosphoshikimate. Gln-171 lines the phosphoenolpyruvate pocket. Residue Asp-313 is the Proton acceptor of the active site. Phosphoenolpyruvate-binding residues include Arg-344, Arg-386, and Lys-411.

Belongs to the EPSP synthase family. As to quaternary structure, monomer.

The protein localises to the cytoplasm. It catalyses the reaction 3-phosphoshikimate + phosphoenolpyruvate = 5-O-(1-carboxyvinyl)-3-phosphoshikimate + phosphate. It participates in metabolic intermediate biosynthesis; chorismate biosynthesis; chorismate from D-erythrose 4-phosphate and phosphoenolpyruvate: step 6/7. Catalyzes the transfer of the enolpyruvyl moiety of phosphoenolpyruvate (PEP) to the 5-hydroxyl of shikimate-3-phosphate (S3P) to produce enolpyruvyl shikimate-3-phosphate and inorganic phosphate. The sequence is that of 3-phosphoshikimate 1-carboxyvinyltransferase from Salmonella agona (strain SL483).